The primary structure comprises 171 residues: Galectin-related protein A (171 aa).

The Galectin domain maps to 38–170 (PFCGHIKGGL…INGDLQLTKL (133 aa)).

Its function is as follows. Does not bind lactose, and may not bind carbohydrates. The sequence is that of Galectin-related protein A (lgalsl-a) from Xenopus laevis (African clawed frog).